A 74-amino-acid chain; its full sequence is Veswaprin-a (74 aa).

The first 24 residues, 1 to 24, serve as a signal peptide directing secretion; the sequence is MSSGGLLLLLGLLTLWAEVTPISG. The WAP domain occupies 27-71; sequence RPKKPGLCPPRPQKPCVKECKNDWSCPGQQKCCNYGCIDECRDPI. 4 disulfide bridges follow: Cys-34–Cys-59, Cys-42–Cys-63, Cys-46–Cys-58, and Cys-52–Cys-67.

It belongs to the venom waprin family. As to expression, expressed by the venom gland.

It localises to the secreted. In terms of biological role, damages membranes of susceptible bacteria. Has no hemolytic activity. Not toxic to mice. Does not inhibit the proteinases elastase and cathepsin G. This chain is Veswaprin-a, found in Demansia vestigiata (Lesser black whip snake).